Reading from the N-terminus, the 228-residue chain is HTH-type transcriptional activator FasR (228 aa).

The segment at 1 to 39 (MSDLAKTAQRRALRSSGSARPDEDVPAPNRRGNRLPRDE) is disordered. The region spanning 38–98 (DERRGQLLVV…AVLHRHVENL (61 aa)) is the HTH tetR-type domain. The H-T-H motif DNA-binding region spans 61 to 80 (GMDEIADRAGVSKPVLYQHF).

In terms of assembly, homodimer.

With respect to regulation, fasR:DNA binding is regulated by long-chain acyl-CoAs (C14- to C26-CoA), which act as effector molecules that modulate the affinity of FasR for its DNA binding sequences and therefore modulate the expression of the essential fas-acpS operon. FasR activity is not affected by mycolic acid biosynthesis intermediates. Functionally, transcriptional activator that plays a central role in sensing mycobacterial long-chain fatty acids and regulating lipid biosynthesis. Activates the expression of the genes encoding the fatty acid synthase (fas) and the 4-phosphopantetheinyl transferase (acpS), whose products are involved in the fatty acid and mycolic acid biosynthesis. Specifically binds to three conserved operator sequences present in the fas-acpS promoter region. Not essential for M.tuberculosis viability, although it is required for the optimal growth in vitro and for virulence in macrophages and in a mouse model of infection. This is HTH-type transcriptional activator FasR from Mycobacterium tuberculosis (strain ATCC 25618 / H37Rv).